The sequence spans 461 residues: Putative 2,3-dihydroxypropane-1-sulfonate exporter (461 aa).

Residues 1–20 (MSHITTEDPATLRLPFKEKL) lie on the Cytoplasmic side of the membrane. Residues 21-41 (SYGIGDLASNILLDIGTLYLL) form a helical membrane-spanning segment. Topologically, residues 42–47 (KFYTDV) are periplasmic. Residues 48–68 (LGLPGTYGGIIFLISKFFTAF) form a helical membrane-spanning segment. Residues 69–92 (TDMGTGIMLDSRRKIGPKGKFRPF) lie on the Cytoplasmic side of the membrane. A helical transmembrane segment spans residues 93 to 113 (ILYASFPVTLLAIANFVGTPF). Over 114–123 (DVTGKTVMAT) the chain is Periplasmic. Residues 124-144 (ILFMLYGLFFSMMNCSYGAMV) traverse the membrane as a helical segment. The Cytoplasmic portion of the chain corresponds to 145-162 (PAITKNPNERASLAAWRQ). A helical membrane pass occupies residues 163 to 183 (GGATLGLLLCTVGFVPVMNLI). Topologically, residues 184 to 188 (EGNQQ) are periplasmic. Residues 189–209 (LGYIFAATLFSLFGLLFMWIC) form a helical membrane-spanning segment. Over 210–243 (YSGVKERYVETQPANPAQKPGLLQSFRAIAGNRP) the chain is Cytoplasmic. The chain crosses the membrane as a helical span at residues 244–264 (LFILCIANLCTLGAFNVKLAI). The Periplasmic portion of the chain corresponds to 265–276 (QVYYTQYVLNDP). A helical membrane pass occupies residues 277-297 (ILLSYMGFFSMGCIFIGVFLM). Topologically, residues 298-308 (PASVRRFGKKK) are cytoplasmic. Residues 309-329 (VYIGGLLIWVLGDLLNYFFGG) form a helical membrane-spanning segment. Residue G330 is a topological domain, periplasmic. The chain crosses the membrane as a helical span at residues 331–351 (SVSFVAFSCLAFFGSAFVNSL). The Cytoplasmic segment spans residues 352–387 (NWALVSDTVEYGEWRTGVRSEGTVYTGFTFFRKVSQ). The helical transmembrane segment at 388–408 (ALAGFFPGWMLTQIGYVPNVA) threads the bilayer. Residues 409–419 (QADHTIEGLRQ) lie on the Periplasmic side of the membrane. The chain crosses the membrane as a helical span at residues 420-440 (LIFIYPSALAVVTIVAMGCFY). Topologically, residues 441–461 (SLNEKMYVRIVEEIEARKRTA) are cytoplasmic.

The protein belongs to the sodium:galactoside symporter (TC 2.A.2) family.

The protein resides in the cell inner membrane. Functionally, could be involved in the export of 2,3-dihydroxypropane-1-sulfonate (DHPS). The chain is Putative 2,3-dihydroxypropane-1-sulfonate exporter (yihP) from Escherichia coli (strain K12).